We begin with the raw amino-acid sequence, 98 residues long: NADH-ubiquinone oxidoreductase chain 4L (98 aa).

Transmembrane regions (helical) follow at residues 1–21 (MSLT…GLLM), 29–49 (SLLC…ITIL), and 61–81 (IILL…LVMV).

Belongs to the complex I subunit 4L family. In terms of assembly, core subunit of respiratory chain NADH dehydrogenase (Complex I) which is composed of 45 different subunits.

It localises to the mitochondrion inner membrane. It carries out the reaction a ubiquinone + NADH + 5 H(+)(in) = a ubiquinol + NAD(+) + 4 H(+)(out). Its function is as follows. Core subunit of the mitochondrial membrane respiratory chain NADH dehydrogenase (Complex I) which catalyzes electron transfer from NADH through the respiratory chain, using ubiquinone as an electron acceptor. Part of the enzyme membrane arm which is embedded in the lipid bilayer and involved in proton translocation. This chain is NADH-ubiquinone oxidoreductase chain 4L (MT-ND4L), found in Artibeus jamaicensis (Jamaican fruit-eating bat).